The primary structure comprises 510 residues: ATP synthase subunit alpha (510 aa).

170 to 177 is an ATP binding site; the sequence is GDRQTGKT.

This sequence belongs to the ATPase alpha/beta chains family. As to quaternary structure, F-type ATPases have 2 components, CF(1) - the catalytic core - and CF(0) - the membrane proton channel. CF(1) has five subunits: alpha(3), beta(3), gamma(1), delta(1), epsilon(1). CF(0) has three main subunits: a(1), b(2) and c(9-12). The alpha and beta chains form an alternating ring which encloses part of the gamma chain. CF(1) is attached to CF(0) by a central stalk formed by the gamma and epsilon chains, while a peripheral stalk is formed by the delta and b chains.

The protein localises to the cell inner membrane. The catalysed reaction is ATP + H2O + 4 H(+)(in) = ADP + phosphate + 5 H(+)(out). Functionally, produces ATP from ADP in the presence of a proton gradient across the membrane. The alpha chain is a regulatory subunit. In Maricaulis maris (strain MCS10) (Caulobacter maris), this protein is ATP synthase subunit alpha.